The primary structure comprises 131 residues: Fumarate reductase subunit C (131 aa).

The next 3 membrane-spanning stretches (helical) occupy residues 30–50, 63–83, and 109–129; these read EGTAVPAVWFSIELIFGLFAL, FLQNPVIVIINLITLAAALLH, and IIKSLWAVTVVATIVILFVAL.

It belongs to the FrdC family. In terms of assembly, part of an enzyme complex containing four subunits: a flavoprotein (FrdA), an iron-sulfur protein (FrdB), and two hydrophobic anchor proteins (FrdC and FrdD).

The protein resides in the cell inner membrane. In terms of biological role, two distinct, membrane-bound, FAD-containing enzymes are responsible for the catalysis of fumarate and succinate interconversion; fumarate reductase is used in anaerobic growth, and succinate dehydrogenase is used in aerobic growth. Anchors the catalytic components of the fumarate reductase complex to the cell inner membrane, binds quinones. The polypeptide is Fumarate reductase subunit C (Shigella dysenteriae serotype 1 (strain Sd197)).